We begin with the raw amino-acid sequence, 127 residues long: Glycine cleavage system H protein (127 aa).

Residues 22 to 104 (KARIGITHFA…YEKAWMIVVE (83 aa)) form the Lipoyl-binding domain. Lys-63 bears the N6-lipoyllysine mark.

This sequence belongs to the GcvH family. As to quaternary structure, the glycine cleavage system is composed of four proteins: P, T, L and H. (R)-lipoate serves as cofactor.

Its function is as follows. The glycine cleavage system catalyzes the degradation of glycine. The H protein shuttles the methylamine group of glycine from the P protein to the T protein. Functionally, is also involved in protein lipoylation via its role as an octanoyl/lipoyl carrier protein intermediate. The polypeptide is Glycine cleavage system H protein (Bacillus subtilis (strain 168)).